We begin with the raw amino-acid sequence, 302 residues long: Putative thiol protease R355 (302 aa).

Active-site residues include His-182 and Asp-199. Cys-244 functions as the Nucleophile in the catalytic mechanism.

It belongs to the peptidase C48 family.

The protein resides in the virion. This Acanthamoeba polyphaga mimivirus (APMV) protein is Putative thiol protease R355.